A 326-amino-acid chain; its full sequence is MSETGIIPKSTDYTDWPADVCKYSQVFEDVLVVGTYMLDESTKLRHGKLVLYDTKEDVLKRVFDMHCDAILDFKWSPHDASVLAVAHSTGHVSFYRHQFRAELMFLRGIKVADSSVLMLSLDFSDSGKELAVSMSNGSVLIIDIDSGVIKNKWKEHDYEAWTCHYSRQDNNLLYSGGDDAALVCYDQRIPNSCIWRDIQVHHSGVVSILSRAPFGPYIATGEYGDFMHTLDTRNIGKPLFSANLGGGVWRLEHMETTENYHKVLGILMHRGAQVLRISNDFSSIDASKRIFKEHESMCYGGDWRHTDGLLATCSFYDKRVCLWEDI.

WD repeat units lie at residues 65–105, 113–152, 155–195, and 293–326; these read MHCD…ELMF, DSSV…IKNK, EHDY…SCIW, and EHES…WEDI.

Belongs to the DPH7 family.

It is found in the cytoplasm. The protein localises to the nucleus. It carries out the reaction diphthine methyl ester-[translation elongation factor 2] + H2O = diphthine-[translation elongation factor 2] + methanol + H(+). It participates in protein modification; peptidyl-diphthamide biosynthesis. Functionally, catalyzes the demethylation of diphthine methyl ester to form diphthine, an intermediate in diphthamide biosynthesis, a post-translational modification of histidine which occurs in translation elongation factor 2 (eft201 and eft202). This chain is Diphthine methyltransferase (rrt2), found in Schizosaccharomyces pombe (strain 972 / ATCC 24843) (Fission yeast).